A 428-amino-acid polypeptide reads, in one-letter code: Something about silencing protein 10 (428 aa).

The disordered stretch occupies residues 1–93; the sequence is MDSDGDDYVM…NTMDWGSKRS (93 aa). Acidic residues-rich tracts occupy residues 15–24 and 46–62; these read QEYDDEEREI and SDDDDDDDDDDEEEQQD. Residues Ser-152, Ser-323, Ser-324, and Ser-337 each carry the phosphoserine modification. Positions 317–386 are disordered; that stretch reads GQQASVSSDD…LRNPRVKHRG (70 aa). The segment covering 324 to 336 has biased composition (acidic residues); that stretch reads SDDDDNDDDDDAE. Over residues 344 to 353 the composition is skewed to acidic residues; that stretch reads EEAGEEEEEE. The span at 370 to 386 shows a compositional bias: basic residues; sequence TPHRKKELRNPRVKHRG.

It belongs to the SAS10 family.

The protein resides in the nucleus. Functionally, essential for gene silencing: has a role in the structure of silenced chromatin. May be involved in gene regulation during development. Binds RNA. The chain is Something about silencing protein 10 from Drosophila melanogaster (Fruit fly).